The sequence spans 525 residues: WD repeat-containing protein JIP5 (525 aa).

5 WD repeats span residues 28 to 69 (VFDE…RILN), 121 to 160 (RHKG…VMKK), 211 to 251 (HNGD…ESDA), 270 to 310 (QEDE…LVDQ), and 358 to 398 (RKHS…DDEE). The segment at 396 to 525 (DEEGKINESY…EHGIRKFEGL (130 aa)) is disordered. A compositionally biased stretch (acidic residues) spans 410–424 (SDNDNGFDSDADSNS). A compositionally biased stretch (low complexity) spans 425–435 (DSESVSSSDVD). The segment covering 463–484 (SKDELLAELEKDLQSSDEDSKH) has biased composition (basic and acidic residues). Residues 485-501 (YTKRTKSTQPKKLKKQK) show a composition bias toward basic residues. Residues 513–525 (QKHEHGIRKFEGL) are compositionally biased toward basic and acidic residues.

The protein belongs to the WD repeat WDR55 family.

It localises to the nucleus. The protein resides in the nucleolus. The polypeptide is WD repeat-containing protein JIP5 (JIP5) (Kluyveromyces lactis (strain ATCC 8585 / CBS 2359 / DSM 70799 / NBRC 1267 / NRRL Y-1140 / WM37) (Yeast)).